The following is a 601-amino-acid chain: Probable Xaa-Pro aminopeptidase P (601 aa).

Mn(2+)-binding residues include Asp-398, Asp-409, Glu-507, and Glu-521.

This sequence belongs to the peptidase M24B family. Mn(2+) serves as cofactor.

It catalyses the reaction Release of any N-terminal amino acid, including proline, that is linked to proline, even from a dipeptide or tripeptide.. Functionally, catalyzes the removal of a penultimate prolyl residue from the N-termini of peptides. The polypeptide is Probable Xaa-Pro aminopeptidase P (ampp) (Sclerotinia sclerotiorum (strain ATCC 18683 / 1980 / Ss-1) (White mold)).